Reading from the N-terminus, the 230-residue chain is Ribosomal RNA small subunit methyltransferase Nep1 (230 aa).

S-adenosyl-L-methionine-binding positions include G184, G189, and 205–210 (IYNKPL).

The protein belongs to the class IV-like SAM-binding methyltransferase superfamily. RNA methyltransferase NEP1 family. Homodimer.

The catalysed reaction is a pseudouridine in rRNA + S-adenosyl-L-methionine = an N(1)-methylpseudouridine in rRNA + S-adenosyl-L-homocysteine + H(+). Methyltransferase involved in ribosomal biogenesis. Specifically catalyzes the N1-methylation of the pseudouridine corresponding to position 914 in M.jannaschii 16S rRNA. This Staphylothermus marinus (strain ATCC 43588 / DSM 3639 / JCM 9404 / F1) protein is Ribosomal RNA small subunit methyltransferase Nep1.